A 404-amino-acid chain; its full sequence is Probable tRNA sulfurtransferase (404 aa).

The 106-residue stretch at 61-166 (EAVSERLKDV…SGYSYIMCDE (106 aa)) folds into the THUMP domain. ATP contacts are provided by residues 184–185 (LL), 209–210 (HF), arginine 266, glycine 288, and glutamine 297.

Belongs to the ThiI family.

The protein resides in the cytoplasm. It catalyses the reaction [ThiI sulfur-carrier protein]-S-sulfanyl-L-cysteine + a uridine in tRNA + 2 reduced [2Fe-2S]-[ferredoxin] + ATP + H(+) = [ThiI sulfur-carrier protein]-L-cysteine + a 4-thiouridine in tRNA + 2 oxidized [2Fe-2S]-[ferredoxin] + AMP + diphosphate. The enzyme catalyses [ThiS sulfur-carrier protein]-C-terminal Gly-Gly-AMP + S-sulfanyl-L-cysteinyl-[cysteine desulfurase] + AH2 = [ThiS sulfur-carrier protein]-C-terminal-Gly-aminoethanethioate + L-cysteinyl-[cysteine desulfurase] + A + AMP + 2 H(+). It participates in cofactor biosynthesis; thiamine diphosphate biosynthesis. In terms of biological role, catalyzes the ATP-dependent transfer of a sulfur to tRNA to produce 4-thiouridine in position 8 of tRNAs, which functions as a near-UV photosensor. Also catalyzes the transfer of sulfur to the sulfur carrier protein ThiS, forming ThiS-thiocarboxylate. This is a step in the synthesis of thiazole, in the thiamine biosynthesis pathway. The sulfur is donated as persulfide by IscS. In Bacillus cereus (strain ZK / E33L), this protein is Probable tRNA sulfurtransferase.